Consider the following 57-residue polypeptide: UPF0337 protein SAV_1088 (57 aa).

2 stretches are compositionally biased toward basic and acidic residues: residues 1 to 15 (MAGD…EQAK) and 36 to 57 (QAEK…VFKH). A disordered region spans residues 1–57 (MAGDQKAKAKMEQAKGKAKAAAGRAVGNERMAAEGQAEKSKGDARQAKEKTKDVFKH).

This sequence belongs to the UPF0337 (CsbD) family.

This Streptomyces avermitilis (strain ATCC 31267 / DSM 46492 / JCM 5070 / NBRC 14893 / NCIMB 12804 / NRRL 8165 / MA-4680) protein is UPF0337 protein SAV_1088.